We begin with the raw amino-acid sequence, 139 residues long: Transcription antitermination protein NusB (139 aa).

This sequence belongs to the NusB family.

In terms of biological role, involved in transcription antitermination. Required for transcription of ribosomal RNA (rRNA) genes. Binds specifically to the boxA antiterminator sequence of the ribosomal RNA (rrn) operons. In Natranaerobius thermophilus (strain ATCC BAA-1301 / DSM 18059 / JW/NM-WN-LF), this protein is Transcription antitermination protein NusB.